A 396-amino-acid polypeptide reads, in one-letter code: Stearoyl-[acyl-carrier-protein] 9-desaturase 2, chloroplastic (396 aa).

A chloroplast-targeting transit peptide spans 1-32; it reads MALRPNDVTLRLTPPLAAAARRNRRAAAGGVR. Fe cation is bound by residues Glu-138, Glu-176, His-179, Glu-229, Glu-262, and His-265.

This sequence belongs to the fatty acid desaturase type 2 family. As to quaternary structure, homodimer. It depends on Fe(2+) as a cofactor.

Its subcellular location is the plastid. The protein localises to the chloroplast. It catalyses the reaction octadecanoyl-[ACP] + 2 reduced [2Fe-2S]-[ferredoxin] + O2 + 2 H(+) = (9Z)-octadecenoyl-[ACP] + 2 oxidized [2Fe-2S]-[ferredoxin] + 2 H2O. It functions in the pathway lipid metabolism; fatty acid metabolism. In terms of biological role, converts stearoyl-ACP to oleoyl-ACP by introduction of a cis double bond between carbons 9 and 10 of the acyl chain. Required for the repression of the salicylic acid (SA) signaling pathway. The chain is Stearoyl-[acyl-carrier-protein] 9-desaturase 2, chloroplastic (SSI2) from Oryza sativa subsp. indica (Rice).